The chain runs to 332 residues: Ketol-acid reductoisomerase (NADP(+)) (332 aa).

The region spanning 5–185 (VKVYYDDEVS…GCTRAGVIET (181 aa)) is the KARI N-terminal Rossmann domain. NADP(+)-binding positions include 28–31 (YGNQ), arginine 51, serine 56, and 86–89 (DLVQ). Histidine 111 is an active-site residue. Glycine 137 provides a ligand contact to NADP(+). Residues 186–331 (TFKDETESDL…RFIRKMSGLE (146 aa)) enclose the KARI C-terminal knotted domain. Mg(2+)-binding residues include aspartate 194, glutamate 198, glutamate 230, and glutamate 234. Position 255 (serine 255) interacts with substrate.

Belongs to the ketol-acid reductoisomerase family. Requires Mg(2+) as cofactor.

It carries out the reaction (2R)-2,3-dihydroxy-3-methylbutanoate + NADP(+) = (2S)-2-acetolactate + NADPH + H(+). The enzyme catalyses (2R,3R)-2,3-dihydroxy-3-methylpentanoate + NADP(+) = (S)-2-ethyl-2-hydroxy-3-oxobutanoate + NADPH + H(+). It participates in amino-acid biosynthesis; L-isoleucine biosynthesis; L-isoleucine from 2-oxobutanoate: step 2/4. It functions in the pathway amino-acid biosynthesis; L-valine biosynthesis; L-valine from pyruvate: step 2/4. Its function is as follows. Involved in the biosynthesis of branched-chain amino acids (BCAA). Catalyzes an alkyl-migration followed by a ketol-acid reduction of (S)-2-acetolactate (S2AL) to yield (R)-2,3-dihydroxy-isovalerate. In the isomerase reaction, S2AL is rearranged via a Mg-dependent methyl migration to produce 3-hydroxy-3-methyl-2-ketobutyrate (HMKB). In the reductase reaction, this 2-ketoacid undergoes a metal-dependent reduction by NADPH to yield (R)-2,3-dihydroxy-isovalerate. This Pyrococcus abyssi (strain GE5 / Orsay) protein is Ketol-acid reductoisomerase (NADP(+)).